Reading from the N-terminus, the 288-residue chain is 33 kDa chaperonin (288 aa).

Intrachain disulfides connect C236/C238 and C269/C272.

Belongs to the HSP33 family. Under oxidizing conditions two disulfide bonds are formed involving the reactive cysteines. Under reducing conditions zinc is bound to the reactive cysteines and the protein is inactive.

Its subcellular location is the cytoplasm. Its function is as follows. Redox regulated molecular chaperone. Protects both thermally unfolding and oxidatively damaged proteins from irreversible aggregation. Plays an important role in the bacterial defense system toward oxidative stress. The sequence is that of 33 kDa chaperonin from Lactococcus lactis subsp. lactis (strain IL1403) (Streptococcus lactis).